The following is a 457-amino-acid chain: Multidrug resistance protein MdtK (457 aa).

12 consecutive transmembrane segments (helical) span residues 11–31, 53–73, 93–113, 127–147, 160–180, 188–208, 239–259, 277–297, 316–336, 357–377, 387–407, and 418–438; these read LLAL…MGFV, IWLP…PVIA, WLVA…GHII, AIGY…FQVL, GMVI…IFIY, LGGV…YLLM, IAIG…FAVV, ALNF…AATI, RTAI…TIVL, LMLL…GSGV, IFFI…YLLA, and PSGF…MMAL.

The protein belongs to the multi antimicrobial extrusion (MATE) (TC 2.A.66.1) family. MdtK subfamily.

Its subcellular location is the cell inner membrane. Multidrug efflux pump that functions probably as a Na(+)/drug antiporter. The chain is Multidrug resistance protein MdtK from Edwardsiella ictaluri (strain 93-146).